The primary structure comprises 215 residues: Cytochrome c biogenesis ATP-binding export protein CcmA (215 aa).

An ABC transporter domain is found at 3–211 (LTAENLAARR…KMTGFAGVDR (209 aa)). 35 to 42 (GRNGSGKS) contacts ATP.

Belongs to the ABC transporter superfamily. CcmA exporter (TC 3.A.1.107) family. The complex is composed of two ATP-binding proteins (CcmA) and two transmembrane proteins (CcmB).

It localises to the cell inner membrane. The catalysed reaction is heme b(in) + ATP + H2O = heme b(out) + ADP + phosphate + H(+). Part of the ABC transporter complex CcmAB involved in the biogenesis of c-type cytochromes; once thought to export heme, this seems not to be the case, but its exact role is uncertain. Responsible for energy coupling to the transport system. The sequence is that of Cytochrome c biogenesis ATP-binding export protein CcmA from Rhizobium etli (strain ATCC 51251 / DSM 11541 / JCM 21823 / NBRC 15573 / CFN 42).